Reading from the N-terminus, the 308-residue chain is Olfactory receptor 5H8 (308 aa).

The Extracellular segment spans residues 1–28 (MDDENATLLTEFVLTGLTYQSEWKIPLF). A helical membrane pass occupies residues 29–49 (LAFLVIYLITIMANLGLIAVI). Residues 50 to 56 (WKDSHLH) lie on the Cytoplasmic side of the membrane. Residues 57-77 (IPMYLFLGSLAFVDAWLSSSV) traverse the membrane as a helical segment. Topologically, residues 78 to 98 (TPKMLISFLAKSMIISVSECK) are extracellular. An intrachain disulfide couples Cys97 to Cys179. The helical transmembrane segment at 99 to 119 (IQFFSFGISGTTECFLLATMA) threads the bilayer. The Cytoplasmic segment spans residues 120 to 133 (YDRYVAICKPLLYP). A helical transmembrane segment spans residues 134–154 (VIMTNGLCIWLLVLSFIGGFL). The Extracellular segment spans residues 155-195 (HALIHEGILFRLTFCNSNIIHHFYCDIIPLLKISCTDPSIN). A helical membrane pass occupies residues 196–216 (FLMLFILSGSIQVFTILTVLV). The Cytoplasmic portion of the chain corresponds to 217-238 (SYTFVLFTILKKKAKDIRKAFS). A helical transmembrane segment spans residues 239 to 259 (TCGAHLLSVSLYYGPLLFMYV). The Extracellular portion of the chain corresponds to 260-270 (HPASPQADDQD). Residues 271–291 (MVESLFYTVIIPFLNPIIYSL) traverse the membrane as a helical segment. Over 292 to 308 (RNKQVIDSLTKTLKGNV) the chain is Cytoplasmic.

This sequence belongs to the G-protein coupled receptor 1 family.

It localises to the cell membrane. Its function is as follows. Odorant receptor. This Homo sapiens (Human) protein is Olfactory receptor 5H8.